A 167-amino-acid chain; its full sequence is Transmembrane protein B169L (167 aa).

Helical transmembrane passes span 28 to 48 and 60 to 80; these read NPFI…FAIC and TAIY…YVLN. N88 carries an N-linked (GlcNAc...) asparagine; by host glycan.

It belongs to the asfivirus B169L family.

The protein localises to the host membrane. It is found in the virion. This African swine fever virus (isolate Tick/Malawi/Lil 20-1/1983) (ASFV) protein is Transmembrane protein B169L.